Here is a 1465-residue protein sequence, read N- to C-terminus: Ankyrin and armadillo repeat-containing protein (1465 aa).

The helical transmembrane segment at Met-313–Leu-329 threads the bilayer. 5 ANK repeats span residues Ala-532 to Gln-561, Asn-582 to Leu-611, Arg-615 to Glu-644, Asn-651 to Lys-680, and Lys-684 to Val-714. ARM repeat units follow at residues Asp-745–Thr-784, Val-786–Lys-825, Glu-827–Met-865, Glu-868–Arg-907, Lys-910–Asn-949, and Pro-1085–Leu-1125. The disordered stretch occupies residues Lys-1431–Gln-1465.

The protein localises to the membrane. The polypeptide is Ankyrin and armadillo repeat-containing protein (Ankar) (Mus musculus (Mouse)).